A 196-amino-acid chain; its full sequence is HTH-type transcriptional regulator BetI (196 aa).

The HTH tetR-type domain occupies 8–68 (EVRRAQLIDA…ATMRHILRDL (61 aa)). The H-T-H motif DNA-binding region spans 31-50 (TLASVAQRANISTGIVSHYF).

It functions in the pathway amine and polyamine biosynthesis; betaine biosynthesis via choline pathway [regulation]. Its function is as follows. Repressor involved in the biosynthesis of the osmoprotectant glycine betaine. It represses transcription of the choline transporter BetT and the genes of BetAB involved in the synthesis of glycine betaine. The sequence is that of HTH-type transcriptional regulator BetI from Paraburkholderia phymatum (strain DSM 17167 / CIP 108236 / LMG 21445 / STM815) (Burkholderia phymatum).